The following is a 293-amino-acid chain: Putative metal ABC transporter substrate-binding protein Hpf (293 aa).

The N-terminal stretch at 1–22 (MRNSFKIMTALALGLFAMQANA) is a signal peptide. The interaction with host components stretch occupies residues 23–48 (KFKVVTTFTVIQDIAQNVAGNAATVE). Residues H58, H123, E189, and D264 each coordinate a divalent metal cation.

The protein belongs to the bacterial solute-binding protein 9 family. Interacts with host laminin and vitronectin. Can interact with both immobilized and soluble vitronectin.

It is found in the cell outer membrane. The protein resides in the cell surface. It localises to the periplasm. Part of an ATP-binding cassette (ABC) transport system involved in metal import. Binds a metal with high affinity and specificity and delivers it to the membrane permease for translocation into the cytoplasm. Acts as an adhesin that promotes binding of H.influenzae to host laminin and vitronectin. In addition, interaction with serum vitronectin plays an important role in bacterial serum resistance. The chain is Putative metal ABC transporter substrate-binding protein Hpf (hpf) from Haemophilus influenzae (strain NTHi 3655).